A 192-amino-acid chain; its full sequence is Interleukin-18 (192 aa).

A propeptide spanning residues 1–35 (MAAMSEDSCVNFKEMMFIDNTLYFIPEENGDLESD) is cleaved from the precursor.

The protein belongs to the IL-1 family. As to quaternary structure, forms a ternary complex with ligand-binding receptor subunit IL18R1 and signaling receptor subunit IL18RAP at the plasma membrane. Mature IL18 first binds to IL18R1 forming a low affinity binary complex, which then interacts with IL18RAP to form a high affinity ternary complex that signals inside the cell. Interacts with cargo receptor TMED10; the interaction mediates the translocation from the cytoplasm into the ERGIC (endoplasmic reticulum-Golgi intermediate compartment) and thereby secretion. Post-translationally, the pro-IL-18 precursor is processed by CASP1 to yield its mature, active form. The pro-IL-18 precursor is however not processed by Casp4/Casp11 in rodents. The pro-IL-18 precursor features autoinhibitory interactions between the propeptide and the post-cleavage-site region, preventing recognition by the IL18R1 receptor. Processing by CASP1 induces conformational changes to generate critical receptor-binding sites. The mature form is then secreted and released in the extracellular milieu by passing through the gasdermin-D (GSDMD) pore. In contrast, cleavage by CASP3 inactivates IL18.

It is found in the cytoplasm. The protein localises to the secreted. Pro-inflammatory cytokine primarily involved in epithelial barrier repair, polarized T-helper 1 (Th1) cell and natural killer (NK) cell immune responses. Upon binding to IL18R1 and IL18RAP, forms a signaling ternary complex which activates NF-kappa-B, triggering synthesis of inflammatory mediators. Synergizes with IL12/interleukin-12 to induce IFNG synthesis from T-helper 1 (Th1) cells and natural killer (NK) cells. Involved in transduction of inflammation downstream of pyroptosis: its mature form is specifically released in the extracellular milieu by passing through the gasdermin-D (GSDMD) pore. This Mus musculus (Mouse) protein is Interleukin-18.